The primary structure comprises 134 residues: MAQGRRVERVAALIRKETSELLINGIRDERVHQGMVSITNVEVSGDLQHCKIFVSIFGDEASQLQVMEGLQAASGYLKGELGRRLQMRRAPDVVFQLDRGIERGTSVLGLLNKLEDERKERGEIPAGSDELPAE.

The protein belongs to the RbfA family. In terms of assembly, monomer. Binds 30S ribosomal subunits, but not 50S ribosomal subunits or 70S ribosomes.

Its subcellular location is the cytoplasm. In terms of biological role, one of several proteins that assist in the late maturation steps of the functional core of the 30S ribosomal subunit. Associates with free 30S ribosomal subunits (but not with 30S subunits that are part of 70S ribosomes or polysomes). Required for efficient processing of 16S rRNA. May interact with the 5'-terminal helix region of 16S rRNA. In Parasynechococcus marenigrum (strain WH8102), this protein is Ribosome-binding factor A.